The chain runs to 216 residues: MGMNKAELIDVLTQKLGSDRRQATAAVENVVDTIVRAVHKGDSVTITGFGVFEQRRRAARVARNPRTGETVKVKPTSVPAFRPGAQFKAVVSGAQRLPAEGPAVKRGVGASAAKKVAKKAPAKKATKAAKKAATKAPARKAATKAPAKKAATKAPAKKAVKATKSPAKKVTKAVKKTAVKASVRKAATKAPAKKAAAKRPATKAPAKKATARRGRK.

Gly2 is a propeptide (removed; alternate). An N-acetylmethionine modification is found at Met3. Positions 3–92 (MNKAELIDVL…PGAQFKAVVS (90 aa)) are bacterial histone-like domain. 6 positions are modified to N6-acetyllysine: Lys5, Lys74, Lys88, Lys105, Lys118, and Lys135. A disordered region spans residues 102–216 (PAVKRGVGAS…KKATARRGRK (115 aa)). Residues 103–216 (AVKRGVGASA…KKATARRGRK (114 aa)) are degenerate repeats region. Residues 104–114 (VKRGVGASAAK) are compositionally biased toward low complexity. Residues 115 to 216 (KVAKKAPAKK…KKATARRGRK (102 aa)) are compositionally biased toward basic residues. Residue Lys140 is modified to N6,N6,N6-trimethyllysine. N6-acetyllysine is present on residues Lys148 and Lys169.

It belongs to the bacterial histone-like protein family. Long actinobacterial subfamily. In terms of assembly, oligomerizes. Interacts with topoisomerase 1 (topA). Interacts with Eis. Interacts with antigen 85 proteins (fbpA, fbpB, fbpC). Probably acetylated by Eis in vivo. In vitro acetylated by Eis (strain H37Rv and H37Ra) on many more residues than those identified in vivo. Deacetylated in vitro by NAD-dependent protein deacylase (Rv1151c). In terms of processing, trimethylated on Lys-140 by human SUV39H1; trimethylation inhibits mycobacterial growth. SUV39H1 probably also trimethylates another residue. Post-translationally, probably succinylated by Rv0802c and desuccinylated by NAD-dependent protein deacylase (Rv1151c).

It is found in the cytoplasm. It localises to the nucleoid. The protein localises to the secreted. Its subcellular location is the cell wall. The enzyme catalyses 4 Fe(2+) + O2 + 4 H(+) = 4 Fe(3+) + 2 H2O. Its function is as follows. A nucleoid-associated protein (NAP) that probably plays a role in chromosome compactation. Binds DNA non-specifically, with greater affinity for supercoiled than linear DNA, binds well to nicked DNA, gapped and cruciform DNA. Has a preference for A:T rich DNA. Required for activation of the mtbB operon. Binds the mtbB promoter in the presence of iron, binding is seen with as little as 25 uM Fe(2+) and increases with increasing Fe(2+). RNase E and HupB jointly contribute to cellular adaptation to changing growth conditions and survival during antibiotic treatment and in the host. Plays a role in stress survival. Stimulates supercoiling relaxation by topoisomerase 1 (Top1, topA). Functionally, binds Fe(3+) but not Fe(2+). Has ferroxidase activity, converts Fe(2+) into Fe(3+) and in the presence of H(2)O(2) prevents the generation of hydroxyl radicals (the Fenton reaction). Protects DNA from damage in the presence of FeSO(4) and H(2)O(2). May function in iron storage. Involved in iron uptake by bacteria (either Fe(3+) or extracellular carboxymycobactin); antibodies against HupB block uptake of both. Following uptake iron is mostly found in the iron siderophores carboxymycobactin (CMb, extracellular) or mycobactin (Mb, lipophilic). Facilitates transfer of iron from CMb to Mb when liposomes plus a cell wall lysate are incubated with CMb. Binds iron, ferri-CMb and ferri-Mb; has 10-fold higher affinity for ferri-Mb. Suggested to transfer iron from CBm to Mb at the cell membrane. In terms of biological role, required for biofilm formation; trimethylation by recombinant human SUV39H1 (a histone methyltransferase) inhibits biofilm formation. Induces lymphoproliferation, particularly in health tuberculin reactors, and is immunogenic. Maybe involved in pathogenesis of inflammatory bowel disease (IBD) in patients with ulcerative colitis and Crohn disease (CD). Bound by anti-neutrophil cytoplasmic antibodies (pANCA), which are a hallmark of IBD. The binding is due to pANCA directed against H1-3 cross-reacting with DBH epitopes. In CD, target of a strong IgA response. May play a role in cell wall assembly. In vitro at low levels enhances formation of TMM and TDM by antigen 85 proteins (fbpA, fbpB, fbpC), at higher levels inhibits TMM and TDM formation. The polypeptide is DNA-binding protein HupB (Mycobacterium tuberculosis (strain ATCC 25618 / H37Rv)).